A 213-amino-acid chain; its full sequence is Thymidylate kinase (213 aa).

Residue 10–17 coordinates ATP; that stretch reads GLEGAGKT.

It belongs to the thymidylate kinase family.

It catalyses the reaction dTMP + ATP = dTDP + ADP. Phosphorylation of dTMP to form dTDP in both de novo and salvage pathways of dTTP synthesis. The sequence is that of Thymidylate kinase from Klebsiella pneumoniae (strain 342).